Here is a 434-residue protein sequence, read N- to C-terminus: Methyl-coenzyme M reductase subunit beta (434 aa).

Tyr365 provides a ligand contact to coenzyme M. Position 367 (Gly367) interacts with coenzyme B.

Belongs to the methyl-coenzyme M reductase beta subunit family. As to quaternary structure, MCR is a hexamer of two alpha, two beta, and two gamma chains, forming a dimer of heterotrimers. It depends on coenzyme F430 as a cofactor.

It is found in the cytoplasm. The catalysed reaction is coenzyme B + methyl-coenzyme M = methane + coenzyme M-coenzyme B heterodisulfide. It functions in the pathway one-carbon metabolism; methyl-coenzyme M reduction; methane from methyl-coenzyme M: step 1/1. Its function is as follows. Component of the methyl-coenzyme M reductase (MCR) I that catalyzes the reductive cleavage of methyl-coenzyme M (CoM-S-CH3 or 2-(methylthio)ethanesulfonate) using coenzyme B (CoB or 7-mercaptoheptanoylthreonine phosphate) as reductant which results in the production of methane and the mixed heterodisulfide of CoB and CoM (CoM-S-S-CoB). This is the final step in methanogenesis. This Methanosarcina barkeri (strain Fusaro / DSM 804) protein is Methyl-coenzyme M reductase subunit beta (mcrB).